A 118-amino-acid chain; its full sequence is Phosphoribosyl-AMP cyclohydrolase (118 aa).

Mg(2+) is bound at residue Asp85. Residue Cys86 coordinates Zn(2+). Mg(2+) contacts are provided by Asp87 and Asp89. Residues Cys102 and Cys109 each contribute to the Zn(2+) site.

This sequence belongs to the PRA-CH family. Homodimer. Requires Mg(2+) as cofactor. The cofactor is Zn(2+).

The protein resides in the cytoplasm. The catalysed reaction is 1-(5-phospho-beta-D-ribosyl)-5'-AMP + H2O = 1-(5-phospho-beta-D-ribosyl)-5-[(5-phospho-beta-D-ribosylamino)methylideneamino]imidazole-4-carboxamide. The protein operates within amino-acid biosynthesis; L-histidine biosynthesis; L-histidine from 5-phospho-alpha-D-ribose 1-diphosphate: step 3/9. Catalyzes the hydrolysis of the adenine ring of phosphoribosyl-AMP. The polypeptide is Phosphoribosyl-AMP cyclohydrolase (Sulfurisphaera tokodaii (strain DSM 16993 / JCM 10545 / NBRC 100140 / 7) (Sulfolobus tokodaii)).